A 1041-amino-acid polypeptide reads, in one-letter code: Sarcoplasmic/endoplasmic reticulum calcium ATPase 2 (1041 aa).

The Cytoplasmic segment spans residues M1 to T48. Residues L49–A69 form a helical membrane-spanning segment. Residues C70–V89 are Lumenal-facing. Residues E90–R110 traverse the membrane as a helical segment. At N111 to L253 the chain is on the cytoplasmic side. Residues D254–I273 form a helical membrane-spanning segment. The Lumenal portion of the chain corresponds to I274–Y295. A helical membrane pass occupies residues F296 to A313. Positions 304, 305, 307, and 309 each coordinate Ca(2+). Residues V314–M756 are Cytoplasmic-facing. D351 serves as the catalytic 4-aspartylphosphate intermediate. Residues D351 and T353 each coordinate Mg(2+). ATP is bound by residues T353, E442, R489, K514, R559, T624, G625, D626, R677, and K683. D702 provides a ligand contact to Mg(2+). N705 contacts ATP. A helical transmembrane segment spans residues K757–L776. The Ca(2+) site is built by N767 and E770. Topologically, residues T777–L786 are lumenal. Residues I787–G807 form a helical membrane-spanning segment. Positions I787–G807 are interaction with PLN. 3 residues coordinate Ca(2+): N795, T798, and D799. Over F808–L827 the chain is Cytoplasmic. A helical membrane pass occupies residues I828–A850. Residues A851 to M896 lie on the Lumenal side of the membrane. C875 and C887 are oxidised to a cystine. A helical membrane pass occupies residues T897 to S916. E907 is a Ca(2+) binding site. Residues E917–N929 are Cytoplasmic-facing. Residues I930–Y948 form a helical membrane-spanning segment. An interaction with PLN region spans residues W931–L942. Over V949–V963 the chain is Lumenal. The helical transmembrane segment at T964–K984 threads the bilayer. Topologically, residues Y985–W1041 are cytoplasmic.

It belongs to the cation transport ATPase (P-type) (TC 3.A.3) family. Type IIA subfamily. As to quaternary structure, interacts with sarcolipin (SLN). Interacts with phospholamban (PLN). Interacts with myoregulin (MRLN). Interacts with DWORF. Interacts with TMX2. The cofactor is Mg(2+). As to expression, only isoform 2 is detected in heart, while both isoforms are expressed in brain, with isoform 2 being predominant.

It localises to the endoplasmic reticulum membrane. The protein resides in the sarcoplasmic reticulum membrane. It carries out the reaction Ca(2+)(in) + ATP + H2O = Ca(2+)(out) + ADP + phosphate + H(+). With respect to regulation, reversibly inhibited by phospholamban (PLN) at low calcium concentrations. Inhibited by sarcolipin (SLN) and myoregulin (MRLN). Enhanced by DWORF; DWORF increases activity by displacing sarcolipin (SLN), phospholamban (PLN) and myoregulin (MRLN). Functionally, this magnesium-dependent enzyme catalyzes the hydrolysis of ATP coupled with the translocation of calcium from the cytosol to the sarcoplasmic reticulum lumen. Isoform SERCA2A is involved in the regulation of the contraction/relaxation cycle. May act as a regulator of TNFSF11-mediated Ca(2+) signaling during osteoclastogenesis. This is Sarcoplasmic/endoplasmic reticulum calcium ATPase 2 (ATP2A2) from Gallus gallus (Chicken).